Consider the following 127-residue polypeptide: Ribonuclease P protein component (127 aa).

Belongs to the RnpA family. Consists of a catalytic RNA component (M1 or rnpB) and a protein subunit.

The enzyme catalyses Endonucleolytic cleavage of RNA, removing 5'-extranucleotides from tRNA precursor.. RNaseP catalyzes the removal of the 5'-leader sequence from pre-tRNA to produce the mature 5'-terminus. It can also cleave other RNA substrates such as 4.5S RNA. The protein component plays an auxiliary but essential role in vivo by binding to the 5'-leader sequence and broadening the substrate specificity of the ribozyme. The protein is Ribonuclease P protein component of Prochlorococcus marinus (strain SARG / CCMP1375 / SS120).